A 78-amino-acid polypeptide reads, in one-letter code: Acyl carrier protein (78 aa).

Positions 2-77 (SDIAERVKKI…DAIKYIGENM (76 aa)) constitute a Carrier domain. Ser37 is subject to O-(pantetheine 4'-phosphoryl)serine.

The protein belongs to the acyl carrier protein (ACP) family. 4'-phosphopantetheine is transferred from CoA to a specific serine of apo-ACP by AcpS. This modification is essential for activity because fatty acids are bound in thioester linkage to the sulfhydryl of the prosthetic group.

It is found in the cytoplasm. It participates in lipid metabolism; fatty acid biosynthesis. Functionally, carrier of the growing fatty acid chain in fatty acid biosynthesis. The polypeptide is Acyl carrier protein (Magnetococcus marinus (strain ATCC BAA-1437 / JCM 17883 / MC-1)).